Reading from the N-terminus, the 424-residue chain is Serine--tRNA ligase (424 aa).

An L-serine-binding site is contributed by T229 to E231. ATP is bound by residues R260–E262 and V276. E283 is a binding site for L-serine. Position 347–350 (E347–S350) interacts with ATP. T382 contacts L-serine.

This sequence belongs to the class-II aminoacyl-tRNA synthetase family. Type-1 seryl-tRNA synthetase subfamily. As to quaternary structure, homodimer. The tRNA molecule binds across the dimer.

The protein localises to the cytoplasm. The enzyme catalyses tRNA(Ser) + L-serine + ATP = L-seryl-tRNA(Ser) + AMP + diphosphate + H(+). It carries out the reaction tRNA(Sec) + L-serine + ATP = L-seryl-tRNA(Sec) + AMP + diphosphate + H(+). It participates in aminoacyl-tRNA biosynthesis; selenocysteinyl-tRNA(Sec) biosynthesis; L-seryl-tRNA(Sec) from L-serine and tRNA(Sec): step 1/1. In terms of biological role, catalyzes the attachment of serine to tRNA(Ser). Is also able to aminoacylate tRNA(Sec) with serine, to form the misacylated tRNA L-seryl-tRNA(Sec), which will be further converted into selenocysteinyl-tRNA(Sec). This chain is Serine--tRNA ligase, found in Rubrobacter xylanophilus (strain DSM 9941 / JCM 11954 / NBRC 16129 / PRD-1).